Consider the following 336-residue polypeptide: MGRHSFKTVSIDEFLELTLRPDLLNLIKKEHHKLMKVKLPGTIANFSRPENSSKNRSTLFPCWDESRVILKSPSKGIPYDNDITSTYIHANFVDGFKDKNKFICSQSPMENTCEDFWRMILQENCHIIVSLTKVDNAVYCYEYWANEKYREKVFGKYVIKTLEIIEEEVFTRSRLLLTDTNNDISQEIHHFWYTNFPLHYGWPIMSPELLNLIFHVDQKREELMNTTGSGPIVIHCSKIVSWTGIFCTIYNALSQVREEKTVSLPQTVLNIRKKRHSSIMNWVEYEICYRVLCEAILNLKTFMYCNLEIFSAFQDKVAAINFYFGKSHNKHSFNNK.

Residues Ile27 to Ala295 form the Tyrosine-protein phosphatase domain.

This sequence belongs to the protein-tyrosine phosphatase family.

This chain is Tyrosine phosphatase-like protein H1 (H1), found in Microplitis demolitor (Parasitoid wasp).